We begin with the raw amino-acid sequence, 413 residues long: Putative competence-damage inducible protein (413 aa).

It belongs to the CinA family.

The protein is Putative competence-damage inducible protein of Thermoanaerobacter sp. (strain X514).